Here is a 106-residue protein sequence, read N- to C-terminus: Transcriptional and immune response regulator (106 aa).

Monomer. Interacts with NOTCH2 (via ANK repeats), the interaction inhibits the nuclear translocation of NOTCH2 N2ICD. Interacts (C-terminus) with CBY1 (C-terminus), TCIM competes with CTNNB1 for the interaction with CBY1. Ubiquitous. Expressed in thyroid papillary carcinoma. Expressed in liver, expression levels decrease in hepatocellular carcinoma. Slightly detected in normal lung, its expression is highly induced in lung cancer cells (at protein level).

The protein localises to the cytoplasm. It localises to the nucleus. It is found in the nucleolus. The protein resides in the nucleus speckle. Seems to be involved in the regulation of cell growth an differentiation, may play different and opposite roles depending on the tissue or cell type. May enhance the WNT-CTNNB1 pathway by relieving antagonistic activity of CBY1. Enhances the proliferation of follicular dendritic cells. Plays a role in the mitogen-activated MAPK2/3 signaling pathway, positively regulates G1-to-S-phase transition of the cell cycle. In endothelial cells, enhances key inflammatory mediators and inflammatory response through the modulation of NF-kappaB transcriptional regulatory activity. Involved in the regulation of heat shock response, seems to play a positive feedback with HSF1 to modulate heat-shock downstream gene expression. Plays a role in the regulation of hematopoiesis even if the mechanisms are unknown. In cancers such as thyroid or lung cancer, it has been described as promoter of cell proliferation, G1-to-S-phase transition and inhibitor of apoptosis. However, it negatively regulates self-renewal of liver cancer cells via suppresion of NOTCH2 signaling. This Homo sapiens (Human) protein is Transcriptional and immune response regulator.